Reading from the N-terminus, the 309-residue chain is Isopentenyl-diphosphate Delta-isomerase II (309 aa).

Lys112 is a binding site for substrate. Residues His116 and His128 each contribute to the Mg(2+) site. In terms of domain architecture, Nudix hydrolase spans 126–278 (LLHRAFSVFL…GLKLSPWFRL (153 aa)). Positions 147 and 151 each coordinate substrate. Cys163 is an active-site residue. Substrate is bound at residue Ser164. Mg(2+) is bound by residues Glu223 and Glu225. The active site involves Glu225.

Belongs to the IPP isomerase type 1 family. The cofactor is Mg(2+).

It carries out the reaction isopentenyl diphosphate = dimethylallyl diphosphate. Its pathway is isoprenoid biosynthesis; dimethylallyl diphosphate biosynthesis; dimethylallyl diphosphate from isopentenyl diphosphate: step 1/1. It functions in the pathway porphyrin-containing compound metabolism; chlorophyll biosynthesis. Functionally, catalyzes the 1,3-allylic rearrangement of the homoallylic substrate isopentenyl (IPP) to its highly electrophilic allylic isomer, dimethylallyl diphosphate (DMAPP). The sequence is that of Isopentenyl-diphosphate Delta-isomerase II (IPI2) from Camptotheca acuminata (Happy tree).